The following is a 542-amino-acid chain: Probable E3 ubiquitin-protein ligase ARI11 (542 aa).

Residues 1-25 form a disordered region; sequence MSSSDRDIIDIESGEEDLYSDGGND. A compositionally biased stretch (acidic residues) spans 10–19; the sequence is DIESGEEDLY. Residues 135-342 are TRIAD supradomain; it reads VDIQCGICFE…SDHKACNAFK (208 aa). Positions 139, 142, 156, 158, 161, 164, 184, 189, 228, 233, 251, 253, 258, 261, 266, 271, 298, and 301 each coordinate Zn(2+). Residues 139-189 form an RING-type 1 zinc finger; the sequence is CGICFESYTRKEIARVSCGHPYCKTCWTGYITTKIEDGPGCLRVKCPEPSC. The segment at 208–271 adopts an IBR-type zinc-finger fold; the sequence is DKYYRYFLRS…CEDAHSPVDC (64 aa). The RING-type 2; atypical zinc finger occupies 298-328; the sequence is CPKCKRPIEKNTGCNHMSCSAPCRHYFCWAC. Cys-311 is an active-site residue. Zn(2+)-binding residues include Cys-316, Cys-320, Cys-325, Cys-328, His-335, and Cys-338.

The protein belongs to the RBR family. Ariadne subfamily. Zn(2+) serves as cofactor.

It carries out the reaction [E2 ubiquitin-conjugating enzyme]-S-ubiquitinyl-L-cysteine + [acceptor protein]-L-lysine = [E2 ubiquitin-conjugating enzyme]-L-cysteine + [acceptor protein]-N(6)-ubiquitinyl-L-lysine.. The protein operates within protein modification; protein ubiquitination. Its function is as follows. Might act as an E3 ubiquitin-protein ligase, or as part of E3 complex, which accepts ubiquitin from specific E2 ubiquitin-conjugating enzymes and then transfers it to substrates. The polypeptide is Probable E3 ubiquitin-protein ligase ARI11 (ARI11) (Arabidopsis thaliana (Mouse-ear cress)).